The sequence spans 528 residues: Glucans biosynthesis protein G 2 (528 aa).

The signal sequence occupies residues 1–44 (MRLHLTFNHSTPATGRKNTKHTLFFGSMLACIISIISLVVPAYG).

It belongs to the OpgD/OpgG family.

The protein localises to the periplasm. It participates in glycan metabolism; osmoregulated periplasmic glucan (OPG) biosynthesis. Functionally, involved in the biosynthesis of osmoregulated periplasmic glucans (OPGs). The sequence is that of Glucans biosynthesis protein G 2 (opgG2) from Shewanella oneidensis (strain ATCC 700550 / JCM 31522 / CIP 106686 / LMG 19005 / NCIMB 14063 / MR-1).